The following is a 252-amino-acid chain: Pantothenate synthetase (252 aa).

29-36 provides a ligand contact to ATP; the sequence is MGNLHAGH. Residue His36 is the Proton donor of the active site. A (R)-pantoate-binding site is contributed by Gln60. Gln60 contributes to the beta-alanine binding site. 146–149 is a binding site for ATP; the sequence is GEKD. Gln152 lines the (R)-pantoate pocket. Residues Val175 and 183–186 contribute to the ATP site; that span reads CSSR.

It belongs to the pantothenate synthetase family. Homodimer.

Its subcellular location is the cytoplasm. The enzyme catalyses (R)-pantoate + beta-alanine + ATP = (R)-pantothenate + AMP + diphosphate + H(+). It functions in the pathway cofactor biosynthesis; (R)-pantothenate biosynthesis; (R)-pantothenate from (R)-pantoate and beta-alanine: step 1/1. Its function is as follows. Catalyzes the condensation of pantoate with beta-alanine in an ATP-dependent reaction via a pantoyl-adenylate intermediate. This chain is Pantothenate synthetase, found in Legionella pneumophila subsp. pneumophila (strain Philadelphia 1 / ATCC 33152 / DSM 7513).